Consider the following 286-residue polypeptide: Phosphatidylserine decarboxylase proenzyme (286 aa).

Active-site charge relay system; for autoendoproteolytic cleavage activity residues include D89, H146, and S252. S252 functions as the Schiff-base intermediate with substrate; via pyruvic acid; for decarboxylase activity in the catalytic mechanism. Pyruvic acid (Ser); by autocatalysis is present on S252.

The protein belongs to the phosphatidylserine decarboxylase family. PSD-B subfamily. Prokaryotic type I sub-subfamily. As to quaternary structure, heterodimer of a large membrane-associated beta subunit and a small pyruvoyl-containing alpha subunit. Pyruvate is required as a cofactor. Post-translationally, is synthesized initially as an inactive proenzyme. Formation of the active enzyme involves a self-maturation process in which the active site pyruvoyl group is generated from an internal serine residue via an autocatalytic post-translational modification. Two non-identical subunits are generated from the proenzyme in this reaction, and the pyruvate is formed at the N-terminus of the alpha chain, which is derived from the carboxyl end of the proenzyme. The autoendoproteolytic cleavage occurs by a canonical serine protease mechanism, in which the side chain hydroxyl group of the serine supplies its oxygen atom to form the C-terminus of the beta chain, while the remainder of the serine residue undergoes an oxidative deamination to produce ammonia and the pyruvoyl prosthetic group on the alpha chain. During this reaction, the Ser that is part of the protease active site of the proenzyme becomes the pyruvoyl prosthetic group, which constitutes an essential element of the active site of the mature decarboxylase.

It is found in the cell membrane. The catalysed reaction is a 1,2-diacyl-sn-glycero-3-phospho-L-serine + H(+) = a 1,2-diacyl-sn-glycero-3-phosphoethanolamine + CO2. It participates in phospholipid metabolism; phosphatidylethanolamine biosynthesis; phosphatidylethanolamine from CDP-diacylglycerol: step 2/2. Catalyzes the formation of phosphatidylethanolamine (PtdEtn) from phosphatidylserine (PtdSer). In Shewanella loihica (strain ATCC BAA-1088 / PV-4), this protein is Phosphatidylserine decarboxylase proenzyme.